The following is a 120-amino-acid chain: Large ribosomal subunit protein eL34x (120 aa).

A disordered region spans residues 31-50 (TYQTTNKRASGPKCPVTGKR).

It belongs to the eukaryotic ribosomal protein eL34 family.

This Arabidopsis thaliana (Mouse-ear cress) protein is Large ribosomal subunit protein eL34x (RPL34C).